The following is a 255-amino-acid chain: Malonyl-[acyl-carrier protein] O-methyltransferase (255 aa).

The protein belongs to the methyltransferase superfamily.

It catalyses the reaction malonyl-[ACP] + S-adenosyl-L-methionine = malonyl-[ACP] methyl ester + S-adenosyl-L-homocysteine. Its pathway is cofactor biosynthesis; biotin biosynthesis. Converts the free carboxyl group of a malonyl-thioester to its methyl ester by transfer of a methyl group from S-adenosyl-L-methionine (SAM). It allows to synthesize pimeloyl-ACP via the fatty acid synthetic pathway. This is Malonyl-[acyl-carrier protein] O-methyltransferase from Serratia marcescens.